The following is a 138-amino-acid chain: Large ribosomal subunit protein bL12c (138 aa).

Belongs to the bacterial ribosomal protein bL12 family. Homodimer. Part of the ribosomal stalk of the 50S ribosomal subunit. Forms a multimeric L10(L12)X complex, where L10 forms an elongated spine to which 2 to 4 L12 dimers bind in a sequential fashion. Binds GTP-bound translation factors.

The protein localises to the plastid. Its function is as follows. Forms part of the ribosomal stalk which helps the ribosome interact with GTP-bound translation factors. Is thus essential for accurate translation. The polypeptide is Large ribosomal subunit protein bL12c (Euglena longa (Euglenophycean alga)).